The chain runs to 100 residues: Large ribosomal subunit protein uL23c (100 aa).

The protein belongs to the universal ribosomal protein uL23 family. As to quaternary structure, part of the 50S ribosomal subunit.

It localises to the plastid. Its subcellular location is the chloroplast. In terms of biological role, binds to 23S rRNA. In Euglena gracilis, this protein is Large ribosomal subunit protein uL23c (rpl23).